We begin with the raw amino-acid sequence, 382 residues long: Lipoyl synthase, mitochondrial (382 aa).

The N-terminal 30 residues, 1–30 (MHGRRHLAASLARALTYAPSRSISSTPSLL), are a transit peptide targeting the mitochondrion. Positions 25–34 (STPSLLQTLD) are enriched in polar residues. The interval 25–47 (STPSLLQTLDPSTPSPAAAPPTA) is disordered. [4Fe-4S] cluster contacts are provided by C112, C117, C123, C143, C147, C150, and S359. A Radical SAM core domain is found at 128 to 348 (ETGTATATIM…RSLGVDMGFR (221 aa)).

It belongs to the radical SAM superfamily. Lipoyl synthase family. Requires [4Fe-4S] cluster as cofactor.

It localises to the mitochondrion. It carries out the reaction [[Fe-S] cluster scaffold protein carrying a second [4Fe-4S](2+) cluster] + N(6)-octanoyl-L-lysyl-[protein] + 2 oxidized [2Fe-2S]-[ferredoxin] + 2 S-adenosyl-L-methionine + 4 H(+) = [[Fe-S] cluster scaffold protein] + N(6)-[(R)-dihydrolipoyl]-L-lysyl-[protein] + 4 Fe(3+) + 2 hydrogen sulfide + 2 5'-deoxyadenosine + 2 L-methionine + 2 reduced [2Fe-2S]-[ferredoxin]. Its pathway is protein modification; protein lipoylation via endogenous pathway; protein N(6)-(lipoyl)lysine from octanoyl-[acyl-carrier-protein]: step 2/2. Functionally, catalyzes the radical-mediated insertion of two sulfur atoms into the C-6 and C-8 positions of the octanoyl moiety bound to the lipoyl domains of lipoate-dependent enzymes, thereby converting the octanoylated domains into lipoylated derivatives. This Oryza sativa subsp. indica (Rice) protein is Lipoyl synthase, mitochondrial.